The sequence spans 317 residues: Transaldolase (317 aa).

The Schiff-base intermediate with substrate role is filled by Lys132.

Belongs to the transaldolase family. Type 1 subfamily. In terms of assembly, homodimer.

Its subcellular location is the cytoplasm. The enzyme catalyses D-sedoheptulose 7-phosphate + D-glyceraldehyde 3-phosphate = D-erythrose 4-phosphate + beta-D-fructose 6-phosphate. It functions in the pathway carbohydrate degradation; pentose phosphate pathway; D-glyceraldehyde 3-phosphate and beta-D-fructose 6-phosphate from D-ribose 5-phosphate and D-xylulose 5-phosphate (non-oxidative stage): step 2/3. Its function is as follows. Transaldolase is important for the balance of metabolites in the pentose-phosphate pathway. This is Transaldolase from Pseudoalteromonas atlantica (strain T6c / ATCC BAA-1087).